A 2108-amino-acid chain; its full sequence is Mycocerosic acid synthase-like polyketide synthase (2108 aa).

A signal peptide spans 1 to 23; that stretch reads MGKERTKTVDRTRVTPVAVIGMG. Cys24 carries N-palmitoyl cysteine lipidation. A lipid anchor (S-diacylglycerol cysteine) is attached at Cys24. The Ketosynthase family 3 (KS3) domain maps to 24 to 436; it reads CRLPGGIDSP…GTNVHAIVEQ (413 aa). Cys185 acts as the Acyl-thioester intermediate; for beta-ketoacyl synthase activity in catalysis. Active-site for beta-ketoacyl synthase activity residues include His320 and His356. The linker domain (LD) stretch occupies residues 438–542; sequence PVPAPESGAP…PYPPAVGQDD (105 aa). An acyltransferase (AT) region spans residues 543–842; the sequence is RGPVWVFSGQ…AAALAGMRRE (300 aa). Catalysis depends on Ser634, which acts as the Acyl-ester intermediate; for acyltransferase activity. The dehydratase (DH) stretch occupies residues 900–1184; the sequence is NTVAVHPLLG…LAVRGLQLGT (285 aa). The N-terminal hotdog fold stretch occupies residues 905 to 1025; sequence HPLLGSHVRL…AVLHVVREAD (121 aa). In terms of domain architecture, PKS/mFAS DH spans 905-1191; sequence HPLLGSHVRL…LGTGASQASE (287 aa). The active-site Proton acceptor; for dehydratase activity is His938. The interval 1044–1191 is C-terminal hotdog fold; it reads PHKVDGAEVR…LGTGASQASE (148 aa). Asp1108 functions as the Proton donor; for dehydratase activity in the catalytic mechanism. Positions 1220 to 1391 are pseudo beta-ketoacyl reductase (PsiKR); the sequence is AWLLISTCDA…SGEDETAWRN (172 aa). An enoylreductase (ER) region spans residues 1419–1743; sequence AGMRLQIRTP…EHTGKLILDV (325 aa). Residues 1765 to 2004 form a beta-ketoacyl reductase (KR) region; that stretch reads GSYIITGGLG…HSPFAEKFQS (240 aa). NADP(+) contacts are provided by residues 1773 to 1776, 1796 to 1799, 1824 to 1825, and 1897 to 1898; these read LGGL, SRSQ, DI, and FS. The 77-residue stretch at 2025-2101 folds into the Carrier domain; sequence EEWPDRLRRL…DLMCDKLAAD (77 aa). At Ser2060 the chain carries O-(pantetheine 4'-phosphoryl)serine.

As to quaternary structure, homodimer.

It localises to the cell membrane. It participates in lipid metabolism; fatty acid biosynthesis. Functionally, polyketide synthase likely involved in the biosynthesis of a polymethyl-branched fatty acid (PMB-FA) that might only be produced during host infection. Is required for the full virulence of M.tuberculosis during host infection. In Mycobacterium tuberculosis (strain ATCC 25618 / H37Rv), this protein is Mycocerosic acid synthase-like polyketide synthase.